The chain runs to 298 residues: ATP synthase gamma chain (298 aa).

This sequence belongs to the ATPase gamma chain family. F-type ATPases have 2 components, CF(1) - the catalytic core - and CF(0) - the membrane proton channel. CF(1) has five subunits: alpha(3), beta(3), gamma(1), delta(1), epsilon(1). CF(0) has three main subunits: a, b and c.

The protein localises to the cell inner membrane. In terms of biological role, produces ATP from ADP in the presence of a proton gradient across the membrane. The gamma chain is believed to be important in regulating ATPase activity and the flow of protons through the CF(0) complex. The protein is ATP synthase gamma chain of Francisella tularensis subsp. holarctica (strain LVS).